The primary structure comprises 1023 residues: 2-oxoglutarate dehydrogenase complex component E1 (1023 aa).

The transit peptide at 1–40 (MFHLRTCAAKLRPLTASQTVKTFSQNRPAAARTFQQIRCY) directs the protein to the mitochondrion. Lys74 bears the N6-succinyllysine mark. The residue at position 100 (Ser100) is a Phosphoserine. The Ca(2+) site is built by His143, Asp156, and Asp158. Arg312 serves as a coordination point for thiamine diphosphate. Lys401 is subject to N6-acetyllysine. 3 residues coordinate thiamine diphosphate: Asp411, Asn444, and Ile446. Residues Asp411, Asn444, and Ile446 each contribute to the Mg(2+) site. A Glycyl lysine isopeptide (Lys-Gly) (interchain with G-Cter in ubiquitin) cross-link involves residue Lys534. Lys564 is subject to N6-succinyllysine. Gln676 is a binding site for thiamine diphosphate. N6-acetyllysine is present on Lys970.

This sequence belongs to the alpha-ketoglutarate dehydrogenase family. In terms of assembly, homodimer. The 2-oxoglutarate dehydrogenase complex is composed of OGDH (2-oxoglutarate dehydrogenase; E1), DLST (dihydrolipoamide succinyltransferase; E2), DLD (dihydrolipoamide dehydrogenase; E3), and the assembly factor KGD4. It contains multiple copies of the three enzymatic components (E1, E2 and E3). In the nucleus, the 2-oxoglutarate dehydrogenase complex associates with KAT2A. Interacts with ABHD11; this interaction maintains the functional lipoylation of the 2-oxoglutarate dehydrogenase complex. Requires thiamine diphosphate as cofactor. Mg(2+) is required as a cofactor.

The protein resides in the mitochondrion. It localises to the nucleus. The enzyme catalyses N(6)-[(R)-lipoyl]-L-lysyl-[protein] + 2-oxoglutarate + H(+) = N(6)-[(R)-S(8)-succinyldihydrolipoyl]-L-lysyl-[protein] + CO2. With respect to regulation, calcium ions and ADP stimulate, whereas ATP and NADH reduce catalytic activity. Its function is as follows. 2-oxoglutarate dehydrogenase (E1o) component of the 2-oxoglutarate dehydrogenase complex (OGDHC). Participates in the first step, rate limiting for the overall conversion of 2-oxoglutarate to succinyl-CoA and CO(2) catalyzed by the whole OGDHC. Catalyzes the irreversible decarboxylation of 2-oxoglutarate (alpha-ketoglutarate) via the thiamine diphosphate (ThDP) cofactor and subsequent transfer of the decarboxylated acyl intermediate on an oxidized dihydrolipoyl group that is covalently amidated to the E2 enzyme (dihydrolipoyllysine-residue succinyltransferase or DLST). Plays a key role in the Krebs (citric acid) cycle, which is a common pathway for oxidation of fuel molecules, including carbohydrates, fatty acids, and amino acids. Can catalyze the decarboxylation of 2-oxoadipate in vitro, but at a much lower rate than 2-oxoglutarate. Mainly active in the mitochondrion. A fraction of the 2-oxoglutarate dehydrogenase complex also localizes in the nucleus and is required for lysine succinylation of histones: associates with KAT2A on chromatin and provides succinyl-CoA to histone succinyltransferase KAT2A. The chain is 2-oxoglutarate dehydrogenase complex component E1 from Homo sapiens (Human).